The sequence spans 444 residues: L-ornithine N(5)-monooxygenase (444 aa).

FAD is bound by residues 40-48 (ERQPAFGWH) and Gln59. Position 64 (Lys64) interacts with substrate. Val125 serves as a coordination point for FAD. Residues 211-214 (AGQS) and Arg236 each bind NADP(+). Substrate contacts are provided by residues 250-253 (NEIF) and Asn280. An NADP(+)-binding site is contributed by 280–282 (NYA). 408 to 410 (RCC) contacts FAD. Residues 420–432 (SARRSKTGSRPRT) are compositionally biased toward basic residues. Residues 420-444 (SARRSKTGSRPRTMKAWPGPRTKND) form a disordered region.

Belongs to the lysine N(6)-hydroxylase/L-ornithine N(5)-oxygenase family. The cofactor is FAD.

The enzyme catalyses L-ornithine + NADPH + O2 = N(5)-hydroxy-L-ornithine + NADP(+) + H2O. It functions in the pathway siderophore biosynthesis; ornibactin biosynthesis. In terms of biological role, catalyzes the conversion of L-ornithine to N(5)-hydroxyornithine, the first step in the biosynthesis of all hydroxamate-containing siderophores, such as ornibactin. The chain is L-ornithine N(5)-monooxygenase from Burkholderia cepacia (Pseudomonas cepacia).